We begin with the raw amino-acid sequence, 132 residues long: MELEHPDDLYYLDSHEYVRFDGETATIGLSAFAVDELGDIVFVELPEEGDKVEFEQSMGAVESVKAASDLYSPVTGTVIEKNSALEDQPELLNQDPYGEEGWLIKVRLDDVEDAKEGLMAAGDYRATLETGD.

The 84-residue stretch at 24–107 (TATIGLSAFA…GEEGWLIKVR (84 aa)) folds into the Lipoyl-binding domain. K65 is modified (N6-lipoyllysine).

It belongs to the GcvH family. In terms of assembly, the glycine cleavage system is composed of four proteins: P, T, L and H. (R)-lipoate is required as a cofactor.

In terms of biological role, the glycine cleavage system catalyzes the degradation of glycine. The H protein shuttles the methylamine group of glycine from the P protein to the T protein. The sequence is that of Glycine cleavage system H protein from Synechocystis sp. (strain ATCC 27184 / PCC 6803 / Kazusa).